Here is a 151-residue protein sequence, read N- to C-terminus: 3-dehydroquinate dehydratase (151 aa).

Catalysis depends on Tyr26, which acts as the Proton acceptor. 3 residues coordinate substrate: Asn75, His81, and Asp88. The Proton donor role is filled by His101. Residues Leu102–Ser103 and Arg112 contribute to the substrate site.

The protein belongs to the type-II 3-dehydroquinase family. As to quaternary structure, homododecamer.

It carries out the reaction 3-dehydroquinate = 3-dehydroshikimate + H2O. It functions in the pathway metabolic intermediate biosynthesis; chorismate biosynthesis; chorismate from D-erythrose 4-phosphate and phosphoenolpyruvate: step 3/7. Functionally, catalyzes a trans-dehydration via an enolate intermediate. This is 3-dehydroquinate dehydratase from Shewanella sediminis (strain HAW-EB3).